Reading from the N-terminus, the 320-residue chain is ATP-dependent 6-phosphofructokinase isozyme 1 (320 aa).

Residue Gly-12 coordinates ATP. ADP is bound by residues 22–26 and 55–60; these read RGVVR and RYSVSD. ATP is bound by residues 73-74 and 103-106; these read RF and GDGS. A Mg(2+)-binding site is contributed by Asp-104. 126–128 provides a ligand contact to substrate; the sequence is TID. Asp-128 serves as the catalytic Proton acceptor. Arg-155 provides a ligand contact to ADP. Substrate-binding positions include Arg-163 and 170–172; that span reads MGR. Residues 186-188, Lys-212, and 214-216 contribute to the ADP site; these read GCE and KKH. Residues Glu-223, Arg-244, and 250–253 contribute to the substrate site; that span reads HIQR.

Belongs to the phosphofructokinase type A (PFKA) family. ATP-dependent PFK group I subfamily. Prokaryotic clade 'B1' sub-subfamily. As to quaternary structure, homotetramer. Mg(2+) is required as a cofactor.

The protein localises to the cytoplasm. It catalyses the reaction beta-D-fructose 6-phosphate + ATP = beta-D-fructose 1,6-bisphosphate + ADP + H(+). Its pathway is carbohydrate degradation; glycolysis; D-glyceraldehyde 3-phosphate and glycerone phosphate from D-glucose: step 3/4. With respect to regulation, allosterically activated by ADP and other diphosphonucleosides, and allosterically inhibited by phosphoenolpyruvate. Its function is as follows. Catalyzes the phosphorylation of D-fructose 6-phosphate to fructose 1,6-bisphosphate by ATP, the first committing step of glycolysis. This chain is ATP-dependent 6-phosphofructokinase isozyme 1, found in Escherichia coli O6:H1 (strain CFT073 / ATCC 700928 / UPEC).